A 161-amino-acid polypeptide reads, in one-letter code: Allophycocyanin beta chain (161 aa).

The residue at position 71 (Asn71) is an N4-methylasparagine. Cys81 contributes to the (2R,3E)-phycocyanobilin binding site.

Belongs to the phycobiliprotein family. Heterodimer of an alpha and a beta chain. In terms of processing, contains one covalently linked phycocyanobilin chromophore.

It localises to the cellular thylakoid membrane. Functionally, light-harvesting photosynthetic bile pigment-protein from the phycobiliprotein complex. Allophycocyanin has a maximum absorption at approximately 650 nanometers. This chain is Allophycocyanin beta chain (apcB), found in Arthrospira platensis (Spirulina platensis).